A 331-amino-acid chain; its full sequence is Tetraacyldisaccharide 4'-kinase (331 aa).

Residue T60–T67 participates in ATP binding.

Belongs to the LpxK family.

The catalysed reaction is a lipid A disaccharide + ATP = a lipid IVA + ADP + H(+). It participates in glycolipid biosynthesis; lipid IV(A) biosynthesis; lipid IV(A) from (3R)-3-hydroxytetradecanoyl-[acyl-carrier-protein] and UDP-N-acetyl-alpha-D-glucosamine: step 6/6. Its function is as follows. Transfers the gamma-phosphate of ATP to the 4'-position of a tetraacyldisaccharide 1-phosphate intermediate (termed DS-1-P) to form tetraacyldisaccharide 1,4'-bis-phosphate (lipid IVA). The protein is Tetraacyldisaccharide 4'-kinase of Pseudomonas syringae pv. tomato (strain ATCC BAA-871 / DC3000).